A 426-amino-acid chain; its full sequence is Putative F-box protein At4g38870 (426 aa).

One can recognise an F-box domain in the interval 47–92 (SVNSELLPVDLIMEILKKLSLKPLIRFLCVSKLWASIIRDPYFMKL).

The protein is Putative F-box protein At4g38870 of Arabidopsis thaliana (Mouse-ear cress).